Here is a 385-residue protein sequence, read N- to C-terminus: Deoxyguanosinetriphosphate triphosphohydrolase-like protein (385 aa).

In terms of domain architecture, HD spans 75 to 204 (RLTHSLEVAQ…INFADEIAYN (130 aa)).

Belongs to the dGTPase family. Type 2 subfamily.

This Geobacter sulfurreducens (strain ATCC 51573 / DSM 12127 / PCA) protein is Deoxyguanosinetriphosphate triphosphohydrolase-like protein.